Here is a 175-residue protein sequence, read N- to C-terminus: Large ribosomal subunit protein mL67 (175 aa).

This sequence belongs to the mitochondrion-specific ribosomal protein mL67 family. As to quaternary structure, component of the mitochondrial large ribosomal subunit (mt-LSU). Mature yeast 74S mitochondrial ribosomes consist of a small (37S) and a large (54S) subunit. The 37S small subunit contains a 15S ribosomal RNA (15S mt-rRNA) and at least 32 different proteins. The 54S large subunit contains a 21S rRNA (21S mt-rRNA) and at least 45 different proteins.

It is found in the mitochondrion. Component of the mitochondrial ribosome (mitoribosome), a dedicated translation machinery responsible for the synthesis of mitochondrial genome-encoded proteins, including at least some of the essential transmembrane subunits of the mitochondrial respiratory chain. The mitoribosomes are attached to the mitochondrial inner membrane and translation products are cotranslationally integrated into the membrane. mL67/mhr1 also has extraribosomal functions, being involved in regulation of mitochondrial DNA recombination, maintenance and repair, and generation of homoplasmic cells. mL67/mhr1 also acts as transcription factor involved in regulation of RNA polymerase II-dependent transcription. The protein is Large ribosomal subunit protein mL67 (mhr1) of Schizosaccharomyces pombe (strain 972 / ATCC 24843) (Fission yeast).